We begin with the raw amino-acid sequence, 409 residues long: Elongation factor Tu, chloroplastic (409 aa).

Residues 10–214 enclose the tr-type G domain; that stretch reads KPHVNIGTIG…TVDAYIPTPE (205 aa). The segment at 19-26 is G1; sequence GHVDHGKT. 19-26 contributes to the GTP binding site; sequence GHVDHGKT. Threonine 26 is a binding site for Mg(2+). The interval 60–64 is G2; that stretch reads GITIN. Residues 81 to 84 form a G3 region; sequence DCPG. GTP contacts are provided by residues 81–85 and 136–139; these read DCPGH and NKED. The tract at residues 136–139 is G4; the sequence is NKED. The tract at residues 174-176 is G5; it reads SAL.

Belongs to the TRAFAC class translation factor GTPase superfamily. Classic translation factor GTPase family. EF-Tu/EF-1A subfamily.

The protein resides in the plastid. It is found in the chloroplast. It carries out the reaction GTP + H2O = GDP + phosphate + H(+). Its function is as follows. GTP hydrolase that promotes the GTP-dependent binding of aminoacyl-tRNA to the A-site of ribosomes during protein biosynthesis. In Pleurastrum terricola (Filamentous green alga), this protein is Elongation factor Tu, chloroplastic (tufA).